Consider the following 509-residue polypeptide: MEEIQRYLQPDRSQQHNFLYPLIFQEYIYALAHDHGLNRNRSILLENPGYNNKLSFLIVKRLITRMYQQNHFLISTNDSNKNSFLGCNKSLYSQMISEGFAFIVEIPFSLRLISSLSSFEGKKIFKSYNLRSIHSTFPFLEDNFSHLNYVLDILIPYPVHLEILVQTLRYWVKDASSLHLLRFFLHEFWNLNSLITSKKPGYSFSKKNQRFFFFLYNSYVYECESTFVFLRNQSSHLRSTSFGALLERIYFYGKIERLVEVFAKDFQVTLWLFKDPFMHYVRYQGKSILASKGTFLLMNKWKFYLVNFWQCHCSLCFHTGRIHINQLSNHSRDFMGYLSSVRLNPSMVRSQMLENSFLINNAIKKFDTLVPIIPLIGSLAKANFCTVLGHPISKPVWSDLSDSDIIDRFGRICRNLFHYYSGSSKKKTLYRIKYILRLSCARTLARKHKSTVRTFLKRSGSELLEEFLTSEEQVLSLTFPRASSSLWGVYRSRIWYLDIFCINDLANYQ.

The protein belongs to the intron maturase 2 family. MatK subfamily.

The protein localises to the plastid. Its subcellular location is the chloroplast. Usually encoded in the trnK tRNA gene intron. Probably assists in splicing its own and other chloroplast group II introns. The chain is Maturase K from Nicotiana sylvestris (Wood tobacco).